The sequence spans 399 residues: LIM/homeobox protein Lhx5 (399 aa).

LIM zinc-binding domains lie at Val3 to Gly61 and Thr62 to Ile125. 2 disordered regions span residues Cys136–Thr185 and Pro301–Trp399. Residues Asp151 to Asn167 are compositionally biased toward basic and acidic residues. Positions Arg180–Lys239 form a DNA-binding region, homeobox.

The protein localises to the nucleus. Its function is as follows. Probably involved in the patterning of the nervous system, in particular in the early specification of the diencephalon. The polypeptide is LIM/homeobox protein Lhx5 (lhx5) (Danio rerio (Zebrafish)).